The primary structure comprises 261 residues: Zinc import ATP-binding protein ZnuC (261 aa).

In terms of domain architecture, ABC transporter spans 6–227 (IQLNNIHLRF…PEYLKLFGKQ (222 aa)). 38 to 45 (GPNGAGKS) lines the ATP pocket.

Belongs to the ABC transporter superfamily. Zinc importer (TC 3.A.1.15.5) family. As to quaternary structure, the complex is composed of two ATP-binding proteins (ZnuC), two transmembrane proteins (ZnuB) and a solute-binding protein (ZnuA).

The protein localises to the cell inner membrane. The enzyme catalyses Zn(2+)(out) + ATP(in) + H2O(in) = Zn(2+)(in) + ADP(in) + phosphate(in) + H(+)(in). Part of the ABC transporter complex ZnuABC involved in zinc import. Responsible for energy coupling to the transport system. This Saccharophagus degradans (strain 2-40 / ATCC 43961 / DSM 17024) protein is Zinc import ATP-binding protein ZnuC.